A 278-amino-acid polypeptide reads, in one-letter code: uncharacterized protein (278 aa).

This is an uncharacterized protein from Methanocaldococcus jannaschii (strain ATCC 43067 / DSM 2661 / JAL-1 / JCM 10045 / NBRC 100440) (Methanococcus jannaschii).